Reading from the N-terminus, the 128-residue chain is Large ribosomal subunit protein bL20 (128 aa).

It belongs to the bacterial ribosomal protein bL20 family.

Its function is as follows. Binds directly to 23S ribosomal RNA and is necessary for the in vitro assembly process of the 50S ribosomal subunit. It is not involved in the protein synthesizing functions of that subunit. In Kocuria rhizophila (strain ATCC 9341 / DSM 348 / NBRC 103217 / DC2201), this protein is Large ribosomal subunit protein bL20.